A 315-amino-acid polypeptide reads, in one-letter code: Homoserine kinase (315 aa).

An ATP-binding site is contributed by 97 to 107 (PPARGLGSSAT).

It belongs to the GHMP kinase family. Homoserine kinase subfamily.

It localises to the cytoplasm. It carries out the reaction L-homoserine + ATP = O-phospho-L-homoserine + ADP + H(+). It functions in the pathway amino-acid biosynthesis; L-threonine biosynthesis; L-threonine from L-aspartate: step 4/5. Its function is as follows. Catalyzes the ATP-dependent phosphorylation of L-homoserine to L-homoserine phosphate. The polypeptide is Homoserine kinase (Parasynechococcus marenigrum (strain WH8102)).